Reading from the N-terminus, the 143-residue chain is uncharacterized protein (143 aa).

The Rhodanese domain occupies 50 to 143; that stretch reads NKEDAVVVDL…GENLPLVRGK (94 aa). The residue at position 91 (lysine 91) is an N6-acetyllysine.

This is an uncharacterized protein from Escherichia coli O6:H1 (strain CFT073 / ATCC 700928 / UPEC).